Reading from the N-terminus, the 805-residue chain is Cell division cycle protein 48 homolog (805 aa).

ATP is bound by residues 249–256 (GPPGSGKT) and 522–529 (GPPGCGKT). A disordered region spans residues 783 to 805 (GATAAADPFATSNAAADDDDLYS).

The protein belongs to the AAA ATPase family.

Its function is as follows. Probably functions in cell division and growth processes. The chain is Cell division cycle protein 48 homolog (CAFP) from Capsicum annuum (Capsicum pepper).